A 248-amino-acid chain; its full sequence is Triosephosphate isomerase (248 aa).

9 to 11 (NWK) is a substrate binding site. The active-site Electrophile is H94. The active-site Proton acceptor is E166. Residues G172, S212, and 233-234 (GG) contribute to the substrate site.

It belongs to the triosephosphate isomerase family. In terms of assembly, homodimer.

The protein localises to the cytoplasm. The catalysed reaction is D-glyceraldehyde 3-phosphate = dihydroxyacetone phosphate. Its pathway is carbohydrate biosynthesis; gluconeogenesis. It participates in carbohydrate degradation; glycolysis; D-glyceraldehyde 3-phosphate from glycerone phosphate: step 1/1. Its function is as follows. Involved in the gluconeogenesis. Catalyzes stereospecifically the conversion of dihydroxyacetone phosphate (DHAP) to D-glyceraldehyde-3-phosphate (G3P). The chain is Triosephosphate isomerase from Thermoanaerobacter sp. (strain X514).